The following is a 399-amino-acid chain: Tyrosine--tRNA ligase 2 (399 aa).

The short motif at 43–52 (PTAPDLHLGH) is the 'HIGH' region element. The 'KMSKS' region signature appears at 227–231 (KMSKS). ATP is bound at residue Lys230. Residues 338-398 (ITLLDLCSVA…IGKRYKFRIG (61 aa)) enclose the S4 RNA-binding domain.

The protein belongs to the class-I aminoacyl-tRNA synthetase family. TyrS type 2 subfamily. In terms of assembly, homodimer.

The protein localises to the cytoplasm. The enzyme catalyses tRNA(Tyr) + L-tyrosine + ATP = L-tyrosyl-tRNA(Tyr) + AMP + diphosphate + H(+). Its function is as follows. Catalyzes the attachment of tyrosine to tRNA(Tyr) in a two-step reaction: tyrosine is first activated by ATP to form Tyr-AMP and then transferred to the acceptor end of tRNA(Tyr). In Photorhabdus laumondii subsp. laumondii (strain DSM 15139 / CIP 105565 / TT01) (Photorhabdus luminescens subsp. laumondii), this protein is Tyrosine--tRNA ligase 2.